A 529-amino-acid polypeptide reads, in one-letter code: MSSSKIKELREGLMSSSKWSMAPGMMMQQNQPRPATTTPPISRGNEDADEGLNTARSFSSFQDLKGMSGDAKEQESATLVHLTKGRAHPRSRRPPRQISIDSAKKEETKNTGSTKAADTKSSVEATISPLKDTKSPSNASVFPIKPTESKTSTTKDSETAKEEDDASSSTTKAVEATTSKASSAHTDTLATSASNSDRGASTPEMVVKAEKREGSTSPIPYSSLSIAERIKQAQNTPFLESKVLPQNNETSDEENVDVKPAAGTVKNVMQAFLQPATPAKDTASKEPSKSSQQPVRTKPRIAQSPFLAQDAKENGGNVEVSSPLSFSASKSPAAVDSSTKTPTEQVNVVSKQAPTTSSTSVISPDPLQTAAPSANVNEVIASLESKVVTRRTGSGNNYRVGLRNVSGSERTKSLSKESPVEPEKPALPDATSSSTPTTENKESWTNQGIKSSQQRSANASPATSPSNQASIHASFTKESSTHSSPSFTLESLFSGAPRVVELTRFSQPSPACSRALLARWKEEYRTSIH.

The span at 1–11 shows a compositional bias: basic and acidic residues; that stretch reads MSSSKIKELRE. 4 disordered regions span residues 1-222, 237-256, 271-372, and 393-488; these read MSSS…IPYS, PFLESKVLPQNNETSDEENV, AFLQ…TAAP, and GSGN…PSFT. The segment covering 27–40 has biased composition (polar residues); the sequence is MQQNQPRPATTTPP. Positions 83 to 95 are enriched in basic residues; sequence TKGRAHPRSRRPP. The span at 110–125 shows a compositional bias: polar residues; that stretch reads NTGSTKAADTKSSVEA. Serine 128 is modified (phosphoserine). Over residues 170 to 199 the composition is skewed to polar residues; the sequence is TTKAVEATTSKASSAHTDTLATSASNSDRG. Phosphoserine is present on serine 217. Residues 237–249 are compositionally biased toward polar residues; that stretch reads PFLESKVLPQNNE. Over residues 321–334 the composition is skewed to low complexity; that stretch reads SSPLSFSASKSPAA. Residues 336-362 are compositionally biased toward polar residues; that stretch reads DSSTKTPTEQVNVVSKQAPTTSSTSVI. Residues 409–426 are compositionally biased toward basic and acidic residues; that stretch reads ERTKSLSKESPVEPEKPA. The segment covering 430-455 has biased composition (polar residues); sequence ATSSSTPTTENKESWTNQGIKSSQQR. Residues 456–470 show a composition bias toward low complexity; that stretch reads SANASPATSPSNQAS. Residues 471–488 are compositionally biased toward polar residues; it reads IHASFTKESSTHSSPSFT.

It localises to the cytoplasm. This is an uncharacterized protein from Schizosaccharomyces pombe (strain 972 / ATCC 24843) (Fission yeast).